A 187-amino-acid polypeptide reads, in one-letter code: Putative zinc finger protein 833 (187 aa).

6 C2H2-type zinc fingers span residues 10–32 (YKCK…ERTH), 38–60 (YECN…ARIH), 66–88 (YICK…ENTH), 94–116 (CECK…ERIH), 122–144 (YKCK…KSTH), and 150–172 (YECK…EGVH).

This is Putative zinc finger protein 833 (ZNF833P) from Homo sapiens (Human).